Consider the following 158-residue polypeptide: 3-hydroxyacyl-[acyl-carrier-protein] dehydratase FabZ (158 aa).

The active site involves H60.

The protein belongs to the thioester dehydratase family. FabZ subfamily.

The protein resides in the cytoplasm. The enzyme catalyses a (3R)-hydroxyacyl-[ACP] = a (2E)-enoyl-[ACP] + H2O. Its function is as follows. Involved in unsaturated fatty acids biosynthesis. Catalyzes the dehydration of short chain beta-hydroxyacyl-ACPs and long chain saturated and unsaturated beta-hydroxyacyl-ACPs. The polypeptide is 3-hydroxyacyl-[acyl-carrier-protein] dehydratase FabZ (Zymomonas mobilis subsp. mobilis (strain ATCC 31821 / ZM4 / CP4)).